The primary structure comprises 89 residues: UPF0213 protein LMOf2365_0181 (89 aa).

Residues 5–80 (SEHFFYVLKC…KKLSRKNKDA (76 aa)) enclose the GIY-YIG domain.

The protein belongs to the UPF0213 family.

The protein is UPF0213 protein LMOf2365_0181 of Listeria monocytogenes serotype 4b (strain F2365).